The primary structure comprises 434 residues: Serine--tRNA ligase (434 aa).

239-241 (TAE) lines the L-serine pocket. 270–272 (RSE) is an ATP binding site. E293 is an L-serine binding site. 357–360 (EISS) is an ATP binding site. S393 contacts L-serine.

Belongs to the class-II aminoacyl-tRNA synthetase family. Type-1 seryl-tRNA synthetase subfamily. In terms of assembly, homodimer. The tRNA molecule binds across the dimer.

The protein resides in the cytoplasm. It catalyses the reaction tRNA(Ser) + L-serine + ATP = L-seryl-tRNA(Ser) + AMP + diphosphate + H(+). It carries out the reaction tRNA(Sec) + L-serine + ATP = L-seryl-tRNA(Sec) + AMP + diphosphate + H(+). It functions in the pathway aminoacyl-tRNA biosynthesis; selenocysteinyl-tRNA(Sec) biosynthesis; L-seryl-tRNA(Sec) from L-serine and tRNA(Sec): step 1/1. Functionally, catalyzes the attachment of serine to tRNA(Ser). Is also able to aminoacylate tRNA(Sec) with serine, to form the misacylated tRNA L-seryl-tRNA(Sec), which will be further converted into selenocysteinyl-tRNA(Sec). The polypeptide is Serine--tRNA ligase (Pseudoalteromonas translucida (strain TAC 125)).